Here is a 338-residue protein sequence, read N- to C-terminus: Heat-inducible transcription repressor HrcA (338 aa).

The protein belongs to the HrcA family.

Negative regulator of class I heat shock genes (grpE-dnaK-dnaJ and groELS operons). Prevents heat-shock induction of these operons. This is Heat-inducible transcription repressor HrcA from Thermotoga maritima (strain ATCC 43589 / DSM 3109 / JCM 10099 / NBRC 100826 / MSB8).